The following is a 359-amino-acid chain: Probable NAD(P)H nitroreductase PigM (359 aa).

The protein belongs to the nitroreductase family. The cofactor is FMN.

It functions in the pathway antibiotic biosynthesis; prodigiosin biosynthesis. In terms of biological role, involved in the biosynthesis of 4-methoxy-2,2'-bipyrrole-5-carbaldehyde (MBC), one of the terminal products involved in the biosynthesis of the red antibiotic prodigiosin (Pig). Catalyzes the oxidation of the hydroxy group of 4-hydroxy-2,2'-bipyrrole-5-methanol (HBM) to yield 4-methoxy-2,2'-bipyrrole-5-carbaldehyde (MBC). This chain is Probable NAD(P)H nitroreductase PigM, found in Serratia sp. (strain ATCC 39006) (Prodigiosinella confusarubida).